Reading from the N-terminus, the 523-residue chain is Synaptotagmin-10 (523 aa).

Residues methionine 1–serine 55 lie on the Vesicular side of the membrane. The cysteine motif stretch occupies residues cysteine 13–serine 35. A helical membrane pass occupies residues leucine 56–phenylalanine 76. Residues tryptophan 77 to proline 523 are Cytoplasmic-facing. Threonine 136 carries the phosphothreonine modification. C2 domains lie at threonine 231 to lysine 352 and aspartate 363 to histidine 496. The Ca(2+) site is built by aspartate 262, aspartate 268, aspartate 320, phenylalanine 321, aspartate 322, serine 325, aspartate 328, aspartate 394, aspartate 400, aspartate 454, and aspartate 456.

It belongs to the synaptotagmin family. In terms of assembly, homodimer; disulfide-linked via the cysteine motif. Can also form heterodimers with SYT3, SYT6, SYT7 and SYT9. Requires Ca(2+) as cofactor. Highly expressed in the olfactory bulb.

The protein localises to the cytoplasmic vesicle. It localises to the secretory vesicle membrane. Functionally, ca(2+) sensor specifically required for the Ca(2+)-dependent exocytosis of secretory vesicles containing IGF1 in neurons of the olfactory bulb. Exocytosis of IGF1 is required for sensory perception of smell. Not involved in Ca(2+)-dependent synaptic vesicle exocytosis. Acts through Ca(2+) and phospholipid binding to the C2 domain: Ca(2+) induces binding of the C2-domains to phospholipid membranes and to assembled SNARE-complexes; both actions contribute to triggering exocytosis. This chain is Synaptotagmin-10, found in Mus musculus (Mouse).